The primary structure comprises 67 residues: Large ribosomal subunit protein bL35 (67 aa).

A compositionally biased stretch (basic residues) spans 1-16; the sequence is MPKMKTKSSAKKRFRV. The tract at residues 1-24 is disordered; sequence MPKMKTKSSAKKRFRVRPGGTVKR.

The protein belongs to the bacterial ribosomal protein bL35 family.

This chain is Large ribosomal subunit protein bL35, found in Paracidovorax citrulli (strain AAC00-1) (Acidovorax citrulli).